We begin with the raw amino-acid sequence, 249 residues long: Leucyl/phenylalanyl-tRNA--protein transferase (249 aa).

This sequence belongs to the L/F-transferase family.

The protein resides in the cytoplasm. It catalyses the reaction N-terminal L-lysyl-[protein] + L-leucyl-tRNA(Leu) = N-terminal L-leucyl-L-lysyl-[protein] + tRNA(Leu) + H(+). The catalysed reaction is N-terminal L-arginyl-[protein] + L-leucyl-tRNA(Leu) = N-terminal L-leucyl-L-arginyl-[protein] + tRNA(Leu) + H(+). It carries out the reaction L-phenylalanyl-tRNA(Phe) + an N-terminal L-alpha-aminoacyl-[protein] = an N-terminal L-phenylalanyl-L-alpha-aminoacyl-[protein] + tRNA(Phe). In terms of biological role, functions in the N-end rule pathway of protein degradation where it conjugates Leu, Phe and, less efficiently, Met from aminoacyl-tRNAs to the N-termini of proteins containing an N-terminal arginine or lysine. The chain is Leucyl/phenylalanyl-tRNA--protein transferase from Xanthomonas axonopodis pv. citri (strain 306).